The following is a 239-amino-acid chain: MNKNIIIKSIAALTILTSITGVGTTVVDGIQQTAKAENTVKQITNTNVAPYSGVTWMGAGTGFVVGNHTIITNKHVTYHMKVGDEIKAHPNGFYNNGGGLYKVTKIVDYPGKEDIAVVQVEEKSTQPKGRKFKDFTSKFNIASEAKENEPISVIGYPNPNGNKLQMYESTGKVLSVNGNIVSSDAIIQPGSSGSPILNSKHEAIGVIYAGNKPSGESTRGFAVYFSPEIKKFIADNLDK.

Positions 1–36 (MNKNIIIKSIAALTILTSITGVGTTVVDGIQQTAKA) are cleaved as a signal peptide. Catalysis depends on charge relay system residues His75, Asp114, and Ser192.

The protein belongs to the peptidase S1B family.

It localises to the secreted. In Staphylococcus aureus (strain MSSA476), this protein is Serine protease SplF (splF).